A 549-amino-acid polypeptide reads, in one-letter code: Glucose-6-phosphate isomerase (549 aa).

Glutamate 355 (proton donor) is an active-site residue. Catalysis depends on residues histidine 387 and lysine 515.

It belongs to the GPI family.

The protein localises to the cytoplasm. The catalysed reaction is alpha-D-glucose 6-phosphate = beta-D-fructose 6-phosphate. It functions in the pathway carbohydrate biosynthesis; gluconeogenesis. It participates in carbohydrate degradation; glycolysis; D-glyceraldehyde 3-phosphate and glycerone phosphate from D-glucose: step 2/4. In terms of biological role, catalyzes the reversible isomerization of glucose-6-phosphate to fructose-6-phosphate. This Haemophilus influenzae (strain ATCC 51907 / DSM 11121 / KW20 / Rd) protein is Glucose-6-phosphate isomerase.